Reading from the N-terminus, the 342-residue chain is tRNA N6-adenosine threonylcarbamoyltransferase (342 aa).

H111 and H115 together coordinate Fe cation. Residues 134–138 (LVSGG), D167, G180, D184, and N273 contribute to the substrate site. Fe cation is bound at residue D298.

Belongs to the KAE1 / TsaD family. Fe(2+) serves as cofactor.

It is found in the cytoplasm. The catalysed reaction is L-threonylcarbamoyladenylate + adenosine(37) in tRNA = N(6)-L-threonylcarbamoyladenosine(37) in tRNA + AMP + H(+). In terms of biological role, required for the formation of a threonylcarbamoyl group on adenosine at position 37 (t(6)A37) in tRNAs that read codons beginning with adenine. Is involved in the transfer of the threonylcarbamoyl moiety of threonylcarbamoyl-AMP (TC-AMP) to the N6 group of A37, together with TsaE and TsaB. TsaD likely plays a direct catalytic role in this reaction. In Gloeobacter violaceus (strain ATCC 29082 / PCC 7421), this protein is tRNA N6-adenosine threonylcarbamoyltransferase.